Here is a 123-residue protein sequence, read N- to C-terminus: Large ribosomal subunit protein bL12 (123 aa).

This sequence belongs to the bacterial ribosomal protein bL12 family. In terms of assembly, homodimer. Part of the ribosomal stalk of the 50S ribosomal subunit. Forms a multimeric L10(L12)X complex, where L10 forms an elongated spine to which 2 to 4 L12 dimers bind in a sequential fashion. Binds GTP-bound translation factors.

Functionally, forms part of the ribosomal stalk which helps the ribosome interact with GTP-bound translation factors. Is thus essential for accurate translation. The protein is Large ribosomal subunit protein bL12 of Borrelia duttonii (strain Ly).